Reading from the N-terminus, the 390-residue chain is GTPase Obg (390 aa).

One can recognise an Obg domain in the interval 1 to 159; that stretch reads MKFVDEASIL…RELLLELMLL (159 aa). The tract at residues 127–147 is disordered; it reads NTRFKSSVNRTPRQKTNGTPG. The segment covering 129 to 145 has biased composition (polar residues); that stretch reads RFKSSVNRTPRQKTNGT. In terms of domain architecture, OBG-type G spans 160 to 333; it reads ADVGMLGMPN…LCWDVMTFIL (174 aa). Residues 166 to 173, 191 to 195, 213 to 216, 283 to 286, and 314 to 316 contribute to the GTP site; these read GMPNAGKS, FTTLV, DIPG, NKID, and SAA. Mg(2+) contacts are provided by S173 and T193.

This sequence belongs to the TRAFAC class OBG-HflX-like GTPase superfamily. OBG GTPase family. As to quaternary structure, monomer. Mg(2+) is required as a cofactor.

It is found in the cytoplasm. Functionally, an essential GTPase which binds GTP, GDP and possibly (p)ppGpp with moderate affinity, with high nucleotide exchange rates and a fairly low GTP hydrolysis rate. Plays a role in control of the cell cycle, stress response, ribosome biogenesis and in those bacteria that undergo differentiation, in morphogenesis control. The polypeptide is GTPase Obg (Shigella sonnei (strain Ss046)).